We begin with the raw amino-acid sequence, 193 residues long: dTTP/UTP pyrophosphatase (193 aa).

Residue aspartate 68 is the Proton acceptor of the active site.

Belongs to the Maf family. YhdE subfamily. The cofactor is a divalent metal cation.

It is found in the cytoplasm. It carries out the reaction dTTP + H2O = dTMP + diphosphate + H(+). The enzyme catalyses UTP + H2O = UMP + diphosphate + H(+). Nucleoside triphosphate pyrophosphatase that hydrolyzes dTTP and UTP. May have a dual role in cell division arrest and in preventing the incorporation of modified nucleotides into cellular nucleic acids. In Ruegeria sp. (strain TM1040) (Silicibacter sp.), this protein is dTTP/UTP pyrophosphatase.